Reading from the N-terminus, the 487-residue chain is NADH-quinone oxidoreductase subunit N (487 aa).

14 helical membrane-spanning segments follow: residues Leu-8–Ile-28, Phe-35–Val-55, Gly-78–Tyr-98, Glu-104–His-124, Leu-125–Tyr-145, Tyr-159–Ala-179, Ile-203–Phe-223, Pro-235–Met-255, Leu-271–Gln-291, Leu-297–Gln-317, Ile-328–Leu-348, Ala-376–Gly-396, Leu-409–Leu-428, and Ala-451–Ile-471.

It belongs to the complex I subunit 2 family. NDH-1 is composed of 13 different subunits. Subunits NuoA, H, J, K, L, M, N constitute the membrane sector of the complex.

It localises to the cell inner membrane. It carries out the reaction a quinone + NADH + 5 H(+)(in) = a quinol + NAD(+) + 4 H(+)(out). Its function is as follows. NDH-1 shuttles electrons from NADH, via FMN and iron-sulfur (Fe-S) centers, to quinones in the respiratory chain. The immediate electron acceptor for the enzyme in this species is believed to be ubiquinone. Couples the redox reaction to proton translocation (for every two electrons transferred, four hydrogen ions are translocated across the cytoplasmic membrane), and thus conserves the redox energy in a proton gradient. The polypeptide is NADH-quinone oxidoreductase subunit N (Yersinia pseudotuberculosis serotype O:1b (strain IP 31758)).